Reading from the N-terminus, the 225-residue chain is uncharacterized protein (225 aa).

Residues methionine 1–alanine 22 form the signal peptide. The 30-residue stretch at glycine 161–tyrosine 190 folds into the 4Fe-4S ferredoxin-type domain.

This is an uncharacterized protein from Escherichia coli (strain K12).